The chain runs to 297 residues: Transcription factor PCF8 (297 aa).

Residues 1-22 (MEEVVGGGKERKRPRGALVGVG) are disordered. In terms of domain architecture, TCP spans 46-104 (GKDRHSKVVTSRGLRDRRVRLSVPTAIAFYDIQDRLGVDQPSKAIEWLIRAAAAAIDAL). 2 disordered regions span residues 116 to 136 (AASS…SETS) and 273 to 297 (AAPA…ERKT). Basic and acidic residues predominate over residues 282–297 (GERRLQLWDFKEERKT).

In terms of assembly, forms homodimers and heterodimers.

The protein resides in the nucleus. Its function is as follows. Transcription activator. Binds the promoter core sequence 5'-GGNCC-3'. The sequence is that of Transcription factor PCF8 (PCF8) from Oryza sativa subsp. indica (Rice).